The primary structure comprises 547 residues: Chaperonin GroEL 1 (547 aa).

ATP is bound by residues 30-33, Lys51, 87-91, Gly415, and Asp495; these read TLGP and DGTTT.

It belongs to the chaperonin (HSP60) family. Forms a cylinder of 14 subunits composed of two heptameric rings stacked back-to-back. Interacts with the co-chaperonin GroES.

The protein resides in the cytoplasm. The enzyme catalyses ATP + H2O + a folded polypeptide = ADP + phosphate + an unfolded polypeptide.. Together with its co-chaperonin GroES, plays an essential role in assisting protein folding. The GroEL-GroES system forms a nano-cage that allows encapsulation of the non-native substrate proteins and provides a physical environment optimized to promote and accelerate protein folding. In Azorhizobium caulinodans (strain ATCC 43989 / DSM 5975 / JCM 20966 / LMG 6465 / NBRC 14845 / NCIMB 13405 / ORS 571), this protein is Chaperonin GroEL 1.